Here is a 428-residue protein sequence, read N- to C-terminus: GTPase Obg (428 aa).

Residues M1–L158 form the Obg domain. Positions A159–K333 constitute an OBG-type G domain. GTP-binding positions include G165–S172, F190–V194, D212–G215, T282–D285, and S314–L316. Mg(2+) contacts are provided by S172 and T192. Residues Y350–E428 enclose the OCT domain.

It belongs to the TRAFAC class OBG-HflX-like GTPase superfamily. OBG GTPase family. Monomer. Mg(2+) is required as a cofactor.

Its subcellular location is the cytoplasm. Its function is as follows. An essential GTPase which binds GTP, GDP and possibly (p)ppGpp with moderate affinity, with high nucleotide exchange rates and a fairly low GTP hydrolysis rate. Plays a role in control of the cell cycle, stress response, ribosome biogenesis and in those bacteria that undergo differentiation, in morphogenesis control. In Lacticaseibacillus casei (strain BL23) (Lactobacillus casei), this protein is GTPase Obg.